We begin with the raw amino-acid sequence, 451 residues long: Tubulin alpha chain (451 aa).

Gln11 contacts GTP. Lys40 bears the N6-acetyllysine mark. Residues Glu71, Gly144, Thr145, Thr179, Asn206, and Asn228 each coordinate GTP. Residue Glu71 coordinates Mg(2+). Glu254 is a catalytic residue. A disordered region spans residues 432-451 (YEEVGAESAEGDDEDEGEDY).

The protein belongs to the tubulin family. Dimer of alpha and beta chains. A typical microtubule is a hollow water-filled tube with an outer diameter of 25 nm and an inner diameter of 15 nM. Alpha-beta heterodimers associate head-to-tail to form protofilaments running lengthwise along the microtubule wall with the beta-tubulin subunit facing the microtubule plus end conferring a structural polarity. Microtubules usually have 13 protofilaments but different protofilament numbers can be found in some organisms and specialized cells. Requires Mg(2+) as cofactor. Undergoes a tyrosination/detyrosination cycle, the cyclic removal and re-addition of a C-terminal tyrosine residue by the enzymes tubulin tyrosine carboxypeptidase (TTCP) and tubulin tyrosine ligase (TTL), respectively. In terms of processing, acetylation of alpha chains at Lys-40 stabilizes microtubules and affects affinity and processivity of microtubule motors. This modification has a role in multiple cellular functions, ranging from cell motility, cell cycle progression or cell differentiation to intracellular trafficking and signaling.

Its subcellular location is the cytoplasm. The protein resides in the cytoskeleton. It catalyses the reaction GTP + H2O = GDP + phosphate + H(+). Tubulin is the major constituent of microtubules, a cylinder consisting of laterally associated linear protofilaments composed of alpha- and beta-tubulin heterodimers. Microtubules grow by the addition of GTP-tubulin dimers to the microtubule end, where a stabilizing cap forms. Below the cap, tubulin dimers are in GDP-bound state, owing to GTPase activity of alpha-tubulin. This chain is Tubulin alpha chain (TBA), found in Daucus carota (Wild carrot).